Reading from the N-terminus, the 364-residue chain is UDP-N-acetylenolpyruvoylglucosamine reductase (364 aa).

Residues 30–196 form the FAD-binding PCMH-type domain; the sequence is LGGPATRLIT…LRVRFELEDA (167 aa). Arginine 173 is an active-site residue. Serine 252 functions as the Proton donor in the catalytic mechanism. Glutamate 356 is a catalytic residue.

The protein belongs to the MurB family. FAD is required as a cofactor.

The protein localises to the cytoplasm. The catalysed reaction is UDP-N-acetyl-alpha-D-muramate + NADP(+) = UDP-N-acetyl-3-O-(1-carboxyvinyl)-alpha-D-glucosamine + NADPH + H(+). It participates in cell wall biogenesis; peptidoglycan biosynthesis. Its function is as follows. Cell wall formation. This Streptomyces avermitilis (strain ATCC 31267 / DSM 46492 / JCM 5070 / NBRC 14893 / NCIMB 12804 / NRRL 8165 / MA-4680) protein is UDP-N-acetylenolpyruvoylglucosamine reductase.